A 207-amino-acid polypeptide reads, in one-letter code: uncharacterized protein (207 aa).

Residues Gly-51 and Asp-72 each contribute to the S-adenosyl-L-methionine site.

Belongs to the methyltransferase superfamily. YrrT family.

Its function is as follows. Could be a S-adenosyl-L-methionine-dependent methyltransferase. This is an uncharacterized protein from Staphylococcus carnosus (strain TM300).